A 486-amino-acid chain; its full sequence is Maternal protein exuperantia (486 aa).

Disordered regions lie at residues 202-233 (NARVDNDNEADSNSSSADKHVKNGLQKERDEF) and 386-477 (STIR…ISLP). The segment covering 218–233 (ADKHVKNGLQKERDEF) has biased composition (basic and acidic residues). A compositionally biased stretch (basic residues) spans 387 to 397 (TIRRRNKRNTP). Polar residues-rich tracts occupy residues 420-437 (KSQSVSSVPDSTTKTPSP) and 464-476 (SALNNTAPASISL).

Functionally, ensures the proper localization of the mRNA of the bicoid gene to the anterior regions of the oocyte thus playing a fundamental role in the establishment of the polarity of the oocyte. May bind the bcd mRNA. The protein is Maternal protein exuperantia (exu) of Drosophila virilis (Fruit fly).